We begin with the raw amino-acid sequence, 510 residues long: 3,4-dihydroxyphenylacetaldehyde synthase (510 aa).

N192 is a catalytic residue. K303 carries the N6-(pyridoxal phosphate)lysine modification.

Belongs to the group II decarboxylase family. The cofactor is pyridoxal 5'-phosphate.

The catalysed reaction is L-dopa + O2 + H2O + H(+) = 3,4-dihydroxyphenylacetaldehyde + H2O2 + NH4(+) + CO2. Functionally, catalyzes the decarboxylation-oxidative deamination of L-3,4-dihydroxyphenylalanine (L-DOPA) to 3,4-dihydroxylphenylacetaldehyde (DHPAA). Involved in cuticle development. Probably responsible for the protein cross-linking during the development of flexible cuticles. The polypeptide is 3,4-dihydroxyphenylacetaldehyde synthase (amd) (Drosophila melanogaster (Fruit fly)).